A 329-amino-acid polypeptide reads, in one-letter code: Homeobox protein ceh-40 (329 aa).

The region spanning 3–186 (EASKSIMDLL…VIQLKKRYLD (184 aa)) is the PBC domain. Positions 10 to 90 (DLLSEVVKIT…EGVAGPDDSL (81 aa)) are PBC-A. Positions 93–186 (IQEAAGTDQY…VIQLKKRYLD (94 aa)) are PBC-B. Positions 187-249 (ARRKRRNFSK…NKRIRYKKTM (63 aa)) form a DNA-binding region, homeobox; TALE-type. The segment at 248–275 (TMAKNEDERRENRKPEDRPPPGAPGAPY) is disordered. Basic and acidic residues predominate over residues 250–266 (AKNEDERRENRKPEDRP).

It belongs to the TALE/PBX homeobox family. Expressed in head dopaminergic neurons.

The protein localises to the nucleus. Functionally, plays a role in regulating gene expression in dopaminergic neurons, acting redundantly with homeobox protein ceh-20 in head neurons. May activate dopamine pathway genes in concert with ETS domain-containing protein ast-1, and homeobox proteins ceh-43 and ceh-20. This chain is Homeobox protein ceh-40 (ceh-40), found in Caenorhabditis elegans.